Reading from the N-terminus, the 186-residue chain is Elongation factor P (186 aa).

This sequence belongs to the elongation factor P family.

Its subcellular location is the cytoplasm. The protein operates within protein biosynthesis; polypeptide chain elongation. Its function is as follows. Involved in peptide bond synthesis. Stimulates efficient translation and peptide-bond synthesis on native or reconstituted 70S ribosomes in vitro. Probably functions indirectly by altering the affinity of the ribosome for aminoacyl-tRNA, thus increasing their reactivity as acceptors for peptidyl transferase. This chain is Elongation factor P, found in Streptococcus sanguinis (strain SK36).